Here is a 348-residue protein sequence, read N- to C-terminus: MSNNGVNALPATGDLCDLTIVGGGPTGIFAAFQCGMNNMSCRIIESMPQLGGQLTALYPEKHIYDVAAFNEVQASGLVDSLWTQAGRYNPEVVLNDQAVSFKKLDDGSFVVMSAAGASFRSRALLIAAGLGAFTPRTLPQLGDVSHLEGSSLFYSVTSRNDFEGKRVVIVGGGDSALDWTMGLLPLAERVTVVHRMASFQGHGKTAHEVLDAREDGKIEVHFNTEVASLETSGSCLRRVCTRSKSGHEEVIDADCLLLLIGFKSNLGPIAQWGLELQDNAIVVDNQMKTSVDGLYAAGDIASYPGKLKIIQTGLSDATMAVRHSLSYIKPGEKIRHQFSSVKMAKEKK.

Threonine 26, glutamate 45, glutamine 53, tyrosine 58, alanine 98, phenylalanine 133, aspartate 299, and serine 340 together coordinate FAD.

The protein belongs to the ferredoxin--NADP reductase type 2 family. As to quaternary structure, homodimer. FAD is required as a cofactor.

The enzyme catalyses 2 reduced [2Fe-2S]-[ferredoxin] + NADP(+) + H(+) = 2 oxidized [2Fe-2S]-[ferredoxin] + NADPH. This is Ferredoxin--NADP reductase from Prosthecochloris aestuarii (strain DSM 271 / SK 413).